The following is a 94-amino-acid chain: Cytochrome b-c1 complex subunit 8, mitochondrial (94 aa).

Over 2-49 (GPPSGKTYMGWWGHMGGPKQKGITSYAVSPYAQKPLQGIFHNAVFNSF) the chain is Mitochondrial matrix. The helical transmembrane segment at 50 to 80 (RRFKSQFLYVLIPAGIYWYWWKNGNEYNEFL) threads the bilayer. Residues 81-94 (YSKAGREELERVNV) are Mitochondrial intermembrane-facing.

This sequence belongs to the UQCRQ/QCR8 family. In terms of assembly, component of the ubiquinol-cytochrome c oxidoreductase (cytochrome b-c1 complex, complex III, CIII), a multisubunit enzyme composed of 10 subunits. The complex is composed of 3 respiratory subunits cytochrome b (COB), cytochrome c1 (CYT1) and Rieske protein (RIP1), 2 core protein subunits COR1 and QCR2, and 5 low-molecular weight protein subunits QCR6, QCR7, QCR8, QCR9 and QCR10. The complex exists as an obligatory dimer and forms supercomplexes (SCs) in the inner mitochondrial membrane with a monomer or a dimer of cytochrome c oxidase (complex IV, CIV), resulting in 2 different assemblies (supercomplexes III(2)IV and III(2)IV(2)).

The protein localises to the mitochondrion inner membrane. In terms of biological role, component of the ubiquinol-cytochrome c oxidoreductase, a multisubunit transmembrane complex that is part of the mitochondrial electron transport chain which drives oxidative phosphorylation. The respiratory chain contains 3 multisubunit complexes succinate dehydrogenase (complex II, CII), ubiquinol-cytochrome c oxidoreductase (cytochrome b-c1 complex, complex III, CIII) and cytochrome c oxidase (complex IV, CIV), that cooperate to transfer electrons derived from NADH and succinate to molecular oxygen, creating an electrochemical gradient over the inner membrane that drives transmembrane transport and the ATP synthase. The cytochrome b-c1 complex catalyzes electron transfer from ubiquinol to cytochrome c, linking this redox reaction to translocation of protons across the mitochondrial inner membrane, with protons being carried across the membrane as hydrogens on the quinol. In the process called Q cycle, 2 protons are consumed from the matrix, 4 protons are released into the intermembrane space and 2 electrons are passed to cytochrome c. The protein is Cytochrome b-c1 complex subunit 8, mitochondrial (QCR8) of Saccharomyces cerevisiae (strain ATCC 204508 / S288c) (Baker's yeast).